The primary structure comprises 485 residues: Cys-Gly metallodipeptidase DUG1 (485 aa).

His-109 serves as a coordination point for Zn(2+). Asp-111 is an active-site residue. Position 144 (Asp-144) interacts with Zn(2+). Glu-178 (proton acceptor) is an active-site residue. Residues Glu-179, Asp-207, and His-457 each coordinate Zn(2+).

It belongs to the peptidase M20A family. In terms of assembly, homodimer. Component of the GSH degradosomal complex. It depends on Zn(2+) as a cofactor. Requires Mn(2+) as cofactor.

The protein resides in the cytoplasm. In terms of biological role, catalytic component of the GSH degradosomal complex involved in the degradation of glutathione (GSH) and other peptides containing a gamma-glu-X bond. Also functions as a dipeptidase with high specificity for Cys-Gly and no activity toward tri- or tetrapeptides. The polypeptide is Cys-Gly metallodipeptidase DUG1 (DUG1) (Candida albicans (strain SC5314 / ATCC MYA-2876) (Yeast)).